The following is a 401-amino-acid chain: MKEKIVLAYSGGLDTSVAVQWLIDKGYDVVACCLDVGEGKDLDIVYKKALDMGAVECHIIDATKEFSDEYVSYAIKGNLMYENAYPLVSALSRPLIAKKLVEIAEKTNSVGIAHGCTGKGNDQVRFEVAIKALNPSLKAFAPVREWAWSREEEIDYAIKHNIPVSINHDSPYSIDQNLWGRANECGILEDPYAAPPEDAFDLTNALEETPDAADEIILTFDKGIPVQIDGKTYELDDLILTLNALAGKHGIGRIDHVENRLVGIKSREIYEAPAAEVILKAHKALETITLTKDVAHFKPIIEKQFAEQLYNGLWFSPLTDSLKLFIDSTQQYVSGDVRIKLFKGNAIVNGRKSPYTLYDEKLATYTKEDAFNQDAAVGFIDIYGLPTQVNSMLHGGYSNEQ.

8-16 (AYSGGLDTS) is an ATP binding site. Tyr-85 provides a ligand contact to L-citrulline. Gly-115 serves as a coordination point for ATP. Thr-117, Asn-121, and Asp-122 together coordinate L-aspartate. L-citrulline is bound at residue Asn-121. 4 residues coordinate L-citrulline: Arg-125, Ser-173, Glu-258, and Tyr-270.

It belongs to the argininosuccinate synthase family. Type 1 subfamily. Homotetramer.

Its subcellular location is the cytoplasm. The enzyme catalyses L-citrulline + L-aspartate + ATP = 2-(N(omega)-L-arginino)succinate + AMP + diphosphate + H(+). The protein operates within amino-acid biosynthesis; L-arginine biosynthesis; L-arginine from L-ornithine and carbamoyl phosphate: step 2/3. The protein is Argininosuccinate synthase of Staphylococcus aureus (strain MSSA476).